Consider the following 622-residue polypeptide: 1-deoxy-D-xylulose-5-phosphate synthase (622 aa).

Thiamine diphosphate-binding positions include His80 and 121-123 (GHS). Asp152 contacts Mg(2+). Thiamine diphosphate-binding positions include 153 to 154 (GA), Asn181, Tyr288, and Glu370. Asn181 serves as a coordination point for Mg(2+).

It belongs to the transketolase family. DXPS subfamily. Homodimer. Mg(2+) serves as cofactor. The cofactor is thiamine diphosphate.

It carries out the reaction D-glyceraldehyde 3-phosphate + pyruvate + H(+) = 1-deoxy-D-xylulose 5-phosphate + CO2. It participates in metabolic intermediate biosynthesis; 1-deoxy-D-xylulose 5-phosphate biosynthesis; 1-deoxy-D-xylulose 5-phosphate from D-glyceraldehyde 3-phosphate and pyruvate: step 1/1. Functionally, catalyzes the acyloin condensation reaction between C atoms 2 and 3 of pyruvate and glyceraldehyde 3-phosphate to yield 1-deoxy-D-xylulose-5-phosphate (DXP). This chain is 1-deoxy-D-xylulose-5-phosphate synthase, found in Shewanella loihica (strain ATCC BAA-1088 / PV-4).